The chain runs to 1899 residues: Protein TIC 214 (1899 aa).

6 helical membrane-spanning segments follow: residues V23–F43, F64–L84, P87–H107, L124–L144, V172–I192, and W217–H237. 2 disordered regions span residues E256–E280 and P1581–L1619. A compositionally biased stretch (basic and acidic residues) spans E269 to E280.

The protein belongs to the TIC214 family. Part of the Tic complex.

The protein resides in the plastid. It localises to the chloroplast inner membrane. Its function is as follows. Involved in protein precursor import into chloroplasts. May be part of an intermediate translocation complex acting as a protein-conducting channel at the inner envelope. In Ceratophyllum demersum (Rigid hornwort), this protein is Protein TIC 214.